We begin with the raw amino-acid sequence, 641 residues long: Threonine--tRNA ligase (641 aa).

The region spanning 1–61 is the TGS domain; it reads MIKINLLNHQ…TQDGDLEILA (61 aa). The interval 240-538 is catalytic; that stretch reads DHKRLNKKLD…LIEENKGVFP (299 aa). The Zn(2+) site is built by Cys334, His385, and His515.

This sequence belongs to the class-II aminoacyl-tRNA synthetase family. In terms of assembly, homodimer. Zn(2+) is required as a cofactor.

The protein resides in the cytoplasm. The enzyme catalyses tRNA(Thr) + L-threonine + ATP = L-threonyl-tRNA(Thr) + AMP + diphosphate + H(+). In terms of biological role, catalyzes the attachment of threonine to tRNA(Thr) in a two-step reaction: L-threonine is first activated by ATP to form Thr-AMP and then transferred to the acceptor end of tRNA(Thr). Also edits incorrectly charged L-seryl-tRNA(Thr). The protein is Threonine--tRNA ligase of Phytoplasma australiense.